Reading from the N-terminus, the 475-residue chain is Amino acid permease 8 (475 aa).

The segment at Met1–Asp22 is disordered. The Cytoplasmic segment spans residues Met1–Thr31. The next 2 membrane-spanning stretches (helical) occupy residues Phe32–Ala52 and Trp53–Ile73. Topologically, residues Thr74 to Tyr120 are cytoplasmic. A helical transmembrane segment spans residues Val121 to Ile141. Over Gly142–Ser157 the chain is Extracellular. Residues Val158–Pro178 form a helical membrane-spanning segment. Residues Asn179–Phe185 lie on the Cytoplasmic side of the membrane. A helical transmembrane segment spans residues Leu186–Ile206. Topologically, residues Ala207–Lys236 are extracellular. A helical membrane pass occupies residues Leu237 to Ile257. The Cytoplasmic portion of the chain corresponds to Gln258–Leu276. A helical membrane pass occupies residues Val277–Phe297. The Extracellular portion of the chain corresponds to Gly298 to Pro314. The chain crosses the membrane as a helical span at residues Tyr315–Val335. Topologically, residues Tyr336–Arg378 are cytoplasmic. The chain crosses the membrane as a helical span at residues Leu379–Phe398. The Extracellular segment spans residues Phe399–Ala401. The chain crosses the membrane as a helical span at residues Ile402–Ile424. Topologically, residues Ala425–Leu441 are cytoplasmic. Residues Leu442–Ile462 traverse the membrane as a helical segment. The Extracellular segment spans residues Asn463–Asp475.

The protein belongs to the amino acid/polyamine transporter 2 family. Amino acid/auxin permease (AAAP) (TC 2.A.18.2) subfamily. As to expression, expressed in flower buds, siliques, developing seeds and funiculi.

Its subcellular location is the cell membrane. Amino acid-proton symporter. Stereospecific transporter with a broad specificity for glutamate, aspartate and neutral and acidic amino acids. The chain is Amino acid permease 8 (AAP8) from Arabidopsis thaliana (Mouse-ear cress).